The chain runs to 393 residues: NAD(P)H-quinone oxidoreductase subunit H, chloroplastic (393 aa).

It belongs to the complex I 49 kDa subunit family. NDH is composed of at least 16 different subunits, 5 of which are encoded in the nucleus.

The protein localises to the plastid. The protein resides in the chloroplast thylakoid membrane. The catalysed reaction is a plastoquinone + NADH + (n+1) H(+)(in) = a plastoquinol + NAD(+) + n H(+)(out). It catalyses the reaction a plastoquinone + NADPH + (n+1) H(+)(in) = a plastoquinol + NADP(+) + n H(+)(out). NDH shuttles electrons from NAD(P)H:plastoquinone, via FMN and iron-sulfur (Fe-S) centers, to quinones in the photosynthetic chain and possibly in a chloroplast respiratory chain. The immediate electron acceptor for the enzyme in this species is believed to be plastoquinone. Couples the redox reaction to proton translocation, and thus conserves the redox energy in a proton gradient. The polypeptide is NAD(P)H-quinone oxidoreductase subunit H, chloroplastic (Angiopteris evecta (Mule's foot fern)).